Reading from the N-terminus, the 66-residue chain is MNKALMIFVYYLTRVTLSKCLVYFTKERYVLKKIDTPIGIPNTCVRFTTSFLYNSILYVLVNRKSV.

This is an uncharacterized protein from Vertebrata (FPV).